The chain runs to 121 residues: Heme-degrading monooxygenase (121 aa).

An ABM domain is found at 2–101; sequence IIVTNTIKVE…EQREDRKGIV (100 aa). N6 lines the Fe cation pocket. A disordered region spans residues 76–98; it reads KSDSFKKAHGRTKDTREQREDRK. The segment covering 78-98 has biased composition (basic and acidic residues); the sequence is DSFKKAHGRTKDTREQREDRK. H84 provides a ligand contact to heme.

It belongs to the antibiotic biosynthesis monooxygenase family. Heme-degrading monooxygenase IsdG subfamily. As to quaternary structure, homodimer.

It is found in the cytoplasm. The enzyme catalyses heme b + 3 reduced [NADPH--hemoprotein reductase] + 3 O2 = biliverdin IXalpha + CO + Fe(2+) + 3 oxidized [NADPH--hemoprotein reductase] + 3 H2O + H(+). In terms of biological role, allows bacterial pathogens to use the host heme as an iron source. Catalyzes the oxidative degradation of the heme macrocyclic porphyrin ring to the biliverdin in the presence of a suitable electron donor such as ascorbate or NADPH--cytochrome P450 reductase, with subsequent release of free iron. The protein is Heme-degrading monooxygenase of Listeria innocua serovar 6a (strain ATCC BAA-680 / CLIP 11262).